The sequence spans 689 residues: Small ribosomal subunit protein mS39 (689 aa).

The N-terminal 37 residues, 1–37 (MAGVSAVRWLGLRSRLGQPLTGRRAGLCKQARSCRFY), are a transit peptide targeting the mitochondrion. Lys126 carries the N6-acetyllysine modification. 10 PPR repeats span residues 149-183 (IKDISEAALKERIELRKVKASVDMFDQLLQAGTTV), 184-219 (SLETTNSLLDLLCYFGDQEPSTDYHFQQTEQSEALE), 255-289 (NAHSYCTMIRGMVKHRAYEQALNLYTELLNNRLHA), 290-330 (DVYT…KVKP), 331-367 (NLQTFNTILKCLRRFHVFARSPALRILREMKAIGIEP), 368-404 (SLATYHHIIHVFDQPGDPLKRSSFIIYDIMNELMGKR), 412-446 (DDKFFQSAMSICSSLRDLELAYQVHGLLNTGDNWK), 454-488 (RNFYYSKFFDLICLMEQIDVTLKWYEDLIPSVYFP), 489-523 (HSQTLIHLLQALDVANRLEMIPKIWKDSKEYGHTF), and 572-606 (PATSLYCIAILFLRAGRTQEAWNMLELFRKHNKIP). Residues 665–689 (NLTALTSDSDTDSSSDSDSDTSEGK) are disordered. The segment covering 673 to 689 (SDTDSSSDSDSDTSEGK) has biased composition (acidic residues).

Belongs to the mitochondrion-specific ribosomal protein mS39 family. As to quaternary structure, component of the mitochondrial ribosome small subunit (28S) which comprises a 12S rRNA and about 30 distinct proteins. Associated with the 12S mitochondrial rRNA (12S mt-rRNA).

It is found in the mitochondrion. Mitochondrial RNA-binding protein that has a role in mitochondrial translation. The polypeptide is Small ribosomal subunit protein mS39 (PTCD3) (Pongo abelii (Sumatran orangutan)).